The chain runs to 294 residues: Nucleotide-binding protein Cbei_4857 (294 aa).

Residue 8-15 (GLSGAGKT) coordinates ATP. 59 to 62 (DIRG) contributes to the GTP binding site.

This sequence belongs to the RapZ-like family.

In terms of biological role, displays ATPase and GTPase activities. The sequence is that of Nucleotide-binding protein Cbei_4857 from Clostridium beijerinckii (strain ATCC 51743 / NCIMB 8052) (Clostridium acetobutylicum).